We begin with the raw amino-acid sequence, 291 residues long: Ribosomal RNA small subunit methyltransferase A (291 aa).

Residues N33, V35, G60, E81, D111, and N129 each coordinate S-adenosyl-L-methionine.

It belongs to the class I-like SAM-binding methyltransferase superfamily. rRNA adenine N(6)-methyltransferase family. RsmA subfamily.

It localises to the cytoplasm. It catalyses the reaction adenosine(1518)/adenosine(1519) in 16S rRNA + 4 S-adenosyl-L-methionine = N(6)-dimethyladenosine(1518)/N(6)-dimethyladenosine(1519) in 16S rRNA + 4 S-adenosyl-L-homocysteine + 4 H(+). Functionally, specifically dimethylates two adjacent adenosines (A1518 and A1519) in the loop of a conserved hairpin near the 3'-end of 16S rRNA in the 30S particle. May play a critical role in biogenesis of 30S subunits. The chain is Ribosomal RNA small subunit methyltransferase A from Streptomyces griseus subsp. griseus (strain JCM 4626 / CBS 651.72 / NBRC 13350 / KCC S-0626 / ISP 5235).